A 425-amino-acid chain; its full sequence is Histidine--tRNA ligase (425 aa).

It belongs to the class-II aminoacyl-tRNA synthetase family. As to quaternary structure, homodimer.

It is found in the cytoplasm. The enzyme catalyses tRNA(His) + L-histidine + ATP = L-histidyl-tRNA(His) + AMP + diphosphate + H(+). The polypeptide is Histidine--tRNA ligase (Shewanella sp. (strain MR-7)).